Consider the following 473-residue polypeptide: Bifunctional protein HldE (473 aa).

The tract at residues 1 to 318 (MKLTLPRYDQ…RAVQREEGSE (318 aa)) is ribokinase. 194 to 197 (NLHE) provides a ligand contact to ATP. D263 is a catalytic residue. The interval 343-473 (FTNGCFDILH…TAIVEKIRNK (131 aa)) is cytidylyltransferase.

It in the N-terminal section; belongs to the carbohydrate kinase PfkB family. The protein in the C-terminal section; belongs to the cytidylyltransferase family. As to quaternary structure, homodimer.

The enzyme catalyses D-glycero-beta-D-manno-heptose 7-phosphate + ATP = D-glycero-beta-D-manno-heptose 1,7-bisphosphate + ADP + H(+). The catalysed reaction is D-glycero-beta-D-manno-heptose 1-phosphate + ATP + H(+) = ADP-D-glycero-beta-D-manno-heptose + diphosphate. It functions in the pathway nucleotide-sugar biosynthesis; ADP-L-glycero-beta-D-manno-heptose biosynthesis; ADP-L-glycero-beta-D-manno-heptose from D-glycero-beta-D-manno-heptose 7-phosphate: step 1/4. The protein operates within nucleotide-sugar biosynthesis; ADP-L-glycero-beta-D-manno-heptose biosynthesis; ADP-L-glycero-beta-D-manno-heptose from D-glycero-beta-D-manno-heptose 7-phosphate: step 3/4. Catalyzes the phosphorylation of D-glycero-D-manno-heptose 7-phosphate at the C-1 position to selectively form D-glycero-beta-D-manno-heptose-1,7-bisphosphate. Its function is as follows. Catalyzes the ADP transfer from ATP to D-glycero-beta-D-manno-heptose 1-phosphate, yielding ADP-D-glycero-beta-D-manno-heptose. The polypeptide is Bifunctional protein HldE (Ectopseudomonas mendocina (strain ymp) (Pseudomonas mendocina)).